Reading from the N-terminus, the 321-residue chain is Polyprenyl transferase cle5 (321 aa).

Transmembrane regions (helical) follow at residues 26–46 (PLLA…HKIT), 57–77 (VLSQ…AGMV), 107–127 (EALV…SWML), 132–149 (VQAA…YPFA), 159–179 (IYPQ…GTLA), 189–209 (LWAS…WTLY), 232–252 (VLAG…VLGA), 262–282 (SQWL…GQLV), and 300–320 (FALG…GGNG).

This sequence belongs to the UbiA prenyltransferase family. Requires Mg(2+) as cofactor.

It localises to the membrane. Its pathway is secondary metabolite biosynthesis; terpenoid biosynthesis. Its function is as follows. Polyprenyl transferase; part of the cluster A that mediates the biosynthesis of chevalone E and its oxidized derivatives that possess a unique five-membered lactone ring and can synergistically enhance the cytotoxicity of doxorubicin (DOX) in breast cancer cells. Within the pathway, cle5 takes part to the biosynthesis of the molecular scaffold by catalyzing the C-3 geranylgeranylation reaction of triacetic acid lactone (TAL) produced by cle1. The molecular scaffold is commonly biosynthesized by a series of enzymes including the non-reducing polyketide synthase (NR-PKS) cle1 that produces the alpha-pyrone triacetic acid lactone (TAL); The membrane-bound prenyltransferase cle5 that accepts TAL as its substrate to perform a C-3 geranylgeranylation reaction, in which the pathway-dedicated GGPS cle6 is required to provide GGPP, the other substrate of cle5; the FAD-dependent monooxygenase Cle3 that forms an (S)-epoxide ring at the terminal olefin of the geranylgeranyl group; and the terpene cyclase Cle7 that catalyzes the cyclization of the prenyl group that yields the pentacyclic pathway intermediate chevalone E. Chevalone E can derivatize into seven new oxidized analogs by the cytochrome P450 monooxygenases cle2 (acting at C-20) and cle4 (acting at C-11 and C-12). This chain is Polyprenyl transferase cle5, found in Aspergillus versicolor.